The following is a 500-amino-acid chain: Probable malate:quinone oxidoreductase (500 aa).

Belongs to the MQO family. The cofactor is FAD.

It carries out the reaction (S)-malate + a quinone = a quinol + oxaloacetate. It functions in the pathway carbohydrate metabolism; tricarboxylic acid cycle; oxaloacetate from (S)-malate (quinone route): step 1/1. The polypeptide is Probable malate:quinone oxidoreductase (Bacillus cereus (strain G9842)).